The sequence spans 257 residues: Transcription factor bHLH55 (257 aa).

In terms of domain architecture, bHLH spans 74–126; sequence NKRAKHKELERQRRQENTSLFKILRYLLPSQYIKGKRSSADHVLEAVNYIKDL.

As to quaternary structure, homodimer. In terms of tissue distribution, expressed in roots, leaves, stems, and flowers.

It localises to the nucleus. This Arabidopsis thaliana (Mouse-ear cress) protein is Transcription factor bHLH55 (BHLH55).